The primary structure comprises 975 residues: Glycine dehydrogenase (decarboxylating) (975 aa).

Lys-723 carries the N6-(pyridoxal phosphate)lysine modification.

It belongs to the GcvP family. In terms of assembly, the glycine cleavage system is composed of four proteins: P, T, L and H. It depends on pyridoxal 5'-phosphate as a cofactor.

The enzyme catalyses N(6)-[(R)-lipoyl]-L-lysyl-[glycine-cleavage complex H protein] + glycine + H(+) = N(6)-[(R)-S(8)-aminomethyldihydrolipoyl]-L-lysyl-[glycine-cleavage complex H protein] + CO2. Functionally, the glycine cleavage system catalyzes the degradation of glycine. The P protein binds the alpha-amino group of glycine through its pyridoxal phosphate cofactor; CO(2) is released and the remaining methylamine moiety is then transferred to the lipoamide cofactor of the H protein. This Burkholderia mallei (strain NCTC 10247) protein is Glycine dehydrogenase (decarboxylating).